Reading from the N-terminus, the 383-residue chain is Chorismate synthase (383 aa).

NADP(+)-binding residues include Arg39 and Arg45. FMN contacts are provided by residues Arg128–Ser130, Gly291, Lys306–Thr310, and Arg332.

This sequence belongs to the chorismate synthase family. Homotetramer. Requires FMNH2 as cofactor.

The catalysed reaction is 5-O-(1-carboxyvinyl)-3-phosphoshikimate = chorismate + phosphate. It participates in metabolic intermediate biosynthesis; chorismate biosynthesis; chorismate from D-erythrose 4-phosphate and phosphoenolpyruvate: step 7/7. In terms of biological role, catalyzes the anti-1,4-elimination of the C-3 phosphate and the C-6 proR hydrogen from 5-enolpyruvylshikimate-3-phosphate (EPSP) to yield chorismate, which is the branch point compound that serves as the starting substrate for the three terminal pathways of aromatic amino acid biosynthesis. This reaction introduces a second double bond into the aromatic ring system. This Thermus thermophilus (strain ATCC BAA-163 / DSM 7039 / HB27) protein is Chorismate synthase.